Consider the following 278-residue polypeptide: 4-deoxy-L-threo-5-hexosulose-uronate ketol-isomerase (278 aa).

Residues H196, H198, E203, and H245 each contribute to the Zn(2+) site.

This sequence belongs to the KduI family. Zn(2+) serves as cofactor.

It carries out the reaction 5-dehydro-4-deoxy-D-glucuronate = 3-deoxy-D-glycero-2,5-hexodiulosonate. It functions in the pathway glycan metabolism; pectin degradation; 2-dehydro-3-deoxy-D-gluconate from pectin: step 4/5. Functionally, catalyzes the isomerization of 5-dehydro-4-deoxy-D-glucuronate to 3-deoxy-D-glycero-2,5-hexodiulosonate. The polypeptide is 4-deoxy-L-threo-5-hexosulose-uronate ketol-isomerase (Yersinia pestis bv. Antiqua (strain Antiqua)).